Here is a 983-residue protein sequence, read N- to C-terminus: Chaperone protein ClpB3, mitochondrial (983 aa).

Residues 1 to 87 (MSRATAVSRL…LFHPTQAARY (87 aa)) constitute a mitochondrion transit peptide. The 144-residue stretch at 97–240 (PGEFTEMAWE…KEAISAVRGS (144 aa)) folds into the Clp R domain. Repeat regions lie at residues 100–165 (FTEM…ISRQ) and 177–240 (IGSS…VRGS). Residues 255–503 (LEKYGIDMTE…KLKMEITSKP (249 aa)) are i. 300-307 (GEPGVGKT) provides a ligand contact to ATP. Residues 504–627 (IELDEVDREI…QQSGKSMLRE (124 aa)) are a coiled coil. The II stretch occupies residues 629–820 (VTDVDIAEIV…VIIMTSNIGS (192 aa)). 703 to 710 (GPTGVGKT) is an ATP binding site.

The protein belongs to the ClpA/ClpB family.

The protein resides in the mitochondrion. Molecular chaperone that may not be involved in heat stress response or tolerance. The protein is Chaperone protein ClpB3, mitochondrial (CLPB3) of Oryza sativa subsp. japonica (Rice).